The chain runs to 250 residues: 5'-nucleotidase SurE (250 aa).

A divalent metal cation contacts are provided by aspartate 8, aspartate 9, serine 39, and asparagine 91.

This sequence belongs to the SurE nucleotidase family. Requires a divalent metal cation as cofactor.

It localises to the cytoplasm. The enzyme catalyses a ribonucleoside 5'-phosphate + H2O = a ribonucleoside + phosphate. Nucleotidase that shows phosphatase activity on nucleoside 5'-monophosphates. This is 5'-nucleotidase SurE from Leptospira borgpetersenii serovar Hardjo-bovis (strain L550).